The sequence spans 72 residues: ATP synthase subunit c (72 aa).

The next 2 helical transmembrane spans lie at 4-24 (ALGA…GMGI) and 46-66 (LLFI…LIAF).

It belongs to the ATPase C chain family. In terms of assembly, F-type ATPases have 2 components, F(1) - the catalytic core - and F(0) - the membrane proton channel. F(1) has five subunits: alpha(3), beta(3), gamma(1), delta(1), epsilon(1). F(0) has three main subunits: a(1), b(2) and c(10-14). The alpha and beta chains form an alternating ring which encloses part of the gamma chain. F(1) is attached to F(0) by a central stalk formed by the gamma and epsilon chains, while a peripheral stalk is formed by the delta and b chains.

It localises to the cell membrane. Functionally, f(1)F(0) ATP synthase produces ATP from ADP in the presence of a proton or sodium gradient. F-type ATPases consist of two structural domains, F(1) containing the extramembraneous catalytic core and F(0) containing the membrane proton channel, linked together by a central stalk and a peripheral stalk. During catalysis, ATP synthesis in the catalytic domain of F(1) is coupled via a rotary mechanism of the central stalk subunits to proton translocation. Its function is as follows. Key component of the F(0) channel; it plays a direct role in translocation across the membrane. A homomeric c-ring of between 10-14 subunits forms the central stalk rotor element with the F(1) delta and epsilon subunits. This Syntrophomonas wolfei subsp. wolfei (strain DSM 2245B / Goettingen) protein is ATP synthase subunit c.